Reading from the N-terminus, the 161-residue chain is Regulator of ribonuclease activity A (161 aa).

The protein belongs to the RraA family. In terms of assembly, homotrimer. Binds to both RNA-binding sites in the C-terminal region of Rne and to RhlB.

The protein resides in the cytoplasm. In terms of biological role, globally modulates RNA abundance by binding to RNase E (Rne) and regulating its endonucleolytic activity. Can modulate Rne action in a substrate-dependent manner by altering the composition of the degradosome. Modulates RNA-binding and helicase activities of the degradosome. This Shewanella sediminis (strain HAW-EB3) protein is Regulator of ribonuclease activity A.